Consider the following 559-residue polypeptide: Coiled-coil domain-containing protein 63 (559 aa).

3 coiled-coil regions span residues E14–T70, E185–S261, and Q364–L414.

Functionally, plays a role in spermiogenesis. Involved in the elongation of flagella and the formation of sperm heads. This is Coiled-coil domain-containing protein 63 from Rattus norvegicus (Rat).